We begin with the raw amino-acid sequence, 151 residues long: Phosphoribosyl-AMP cyclohydrolase (151 aa).

Aspartate 94 contacts Mg(2+). Cysteine 95 provides a ligand contact to Zn(2+). Mg(2+)-binding residues include aspartate 96 and aspartate 98. Zn(2+) is bound by residues cysteine 112 and cysteine 119.

Belongs to the PRA-CH family. In terms of assembly, homodimer. The cofactor is Mg(2+). Zn(2+) is required as a cofactor.

The protein localises to the cytoplasm. The catalysed reaction is 1-(5-phospho-beta-D-ribosyl)-5'-AMP + H2O = 1-(5-phospho-beta-D-ribosyl)-5-[(5-phospho-beta-D-ribosylamino)methylideneamino]imidazole-4-carboxamide. Its pathway is amino-acid biosynthesis; L-histidine biosynthesis; L-histidine from 5-phospho-alpha-D-ribose 1-diphosphate: step 3/9. Functionally, catalyzes the hydrolysis of the adenine ring of phosphoribosyl-AMP. The polypeptide is Phosphoribosyl-AMP cyclohydrolase (Rhodopseudomonas palustris (strain ATCC BAA-98 / CGA009)).